The chain runs to 64 residues: Alpha-mammal toxin AnCra1 (64 aa).

The 63-residue stretch at 2 to 64 (KDGYIVDDVN…VRTKGPGRCN (63 aa)) folds into the LCN-type CS-alpha/beta domain. Cystine bridges form between Cys12/Cys63, Cys16/Cys36, Cys22/Cys46, and Cys26/Cys48.

It belongs to the long (4 C-C) scorpion toxin superfamily. Sodium channel inhibitor family. Alpha subfamily. Expressed by the venom gland.

The protein localises to the secreted. Its function is as follows. Alpha toxins bind voltage-independently at site-3 of sodium channels (Nav) and inhibit the inactivation of the activated channels, thereby blocking neuronal transmission. This toxin is active against mammals. The recombinant toxin selectively inhibits the fast inactivation of hNav1.7/SCN9A channel (EC(50)=136.7 nM). Is potent in inhibiting the fast inactivation of hNav1.7 and has little effect on the steady-state inactivation. In vivo, intravenous injection into mice induces muscle contraction, leading to severe paralysis and death. This is Alpha-mammal toxin AnCra1 from Androctonus crassicauda (Arabian fat-tailed scorpion).